A 95-amino-acid chain; its full sequence is Aspartyl/glutamyl-tRNA(Asn/Gln) amidotransferase subunit C (95 aa).

It belongs to the GatC family. In terms of assembly, heterotrimer of A, B and C subunits.

The catalysed reaction is L-glutamyl-tRNA(Gln) + L-glutamine + ATP + H2O = L-glutaminyl-tRNA(Gln) + L-glutamate + ADP + phosphate + H(+). It carries out the reaction L-aspartyl-tRNA(Asn) + L-glutamine + ATP + H2O = L-asparaginyl-tRNA(Asn) + L-glutamate + ADP + phosphate + 2 H(+). In terms of biological role, allows the formation of correctly charged Asn-tRNA(Asn) or Gln-tRNA(Gln) through the transamidation of misacylated Asp-tRNA(Asn) or Glu-tRNA(Gln) in organisms which lack either or both of asparaginyl-tRNA or glutaminyl-tRNA synthetases. The reaction takes place in the presence of glutamine and ATP through an activated phospho-Asp-tRNA(Asn) or phospho-Glu-tRNA(Gln). The sequence is that of Aspartyl/glutamyl-tRNA(Asn/Gln) amidotransferase subunit C from Jannaschia sp. (strain CCS1).